Here is a 676-residue protein sequence, read N- to C-terminus: Electrogenic aspartate/glutamate antiporter SLC25A13, mitochondrial (676 aa).

A2 carries the post-translational modification N-acetylalanine. Residues 2–295 (AAAKVALTKR…TLADIERIAP (294 aa)) form a regulatory N-terminal domain region. Topologically, residues 2–332 (AAAKVALTKR…LLQLAESAYR (331 aa)) are mitochondrial intermembrane. EF-hand domains are found at residues 51-86 (SQPNPKTVELLSGVVDQTKDGLISFQEFVAFESVLC), 87-122 (APDALFMVAFQLFDKAGKGEVTFEDVRQVFGQTTIH), 125-157 (IPFNWDSEFVQLHFGKERKRHLTYAEFTQFLLE), and 158-193 (IQLEHAKQAFVQRDNAKTGKVTAIDFRDIMVTIRPH). The Ca(2+) site is built by D66, T68, D70, L72, and E77. The interval 296 to 312 (LEEGMLPFNLAEAQRQQ) is linker loop domain. A carrier domain region spans residues 322–613 (FLLQLAESAY…LQRWFYVDFG (292 aa)). Solcar repeat units lie at residues 327–419 (AESA…VRDK), 427–511 (VPLL…VKAS), and 519–607 (VSPG…LQRW). Residues 333 to 350 (FGLGSIAGAVGATAVYPI) traverse the membrane as a helical segment. Residues 351–393 (DLVKTRMQNQRSTGSFVGELMYKNSFDCFKKVLRYEGFFGLYR) are Mitochondrial matrix-facing. Residues K354 and K373 each carry the N6-acetyllysine modification. The helical transmembrane segment at 394-413 (GLLPQLLGVAPEKAIKLTVN) threads the bilayer. The Mitochondrial intermembrane segment spans residues 414–436 (DFVRDKFMHKDGSVPLLAEIFAG). Residues 437–450 (GCAGGSQVIFTNPL) form a helical membrane-spanning segment. At 451–485 (EIVKIRLQVAGEITTGPRVSALSVVRDLGFFGIYK) the chain is on the mitochondrial matrix side. Residue K454 is modified to N6-methyllysine. K485 is subject to N6-acetyllysine; alternate. An N6-succinyllysine; alternate modification is found at K485. Residues 486-505 (GAKACFLRDIPFSAIYFPCY) form a helical membrane-spanning segment. Over 506–524 (AHVKASFANEDGQVSPGSL) the chain is Mitochondrial intermembrane. A helical membrane pass occupies residues 525 to 542 (LLAGAIAGMPAASLVTPA). Over 543–581 (DVIKTRLQVAARAGQTTYSGVTDCFRKILREEGPKALWK) the chain is Mitochondrial matrix. At K581 the chain carries N6-succinyllysine. The chain crosses the membrane as a helical span at residues 582–601 (GAGARVFRSSPQFGVTLLTY). At 602–676 (ELLQRWFYVD…STSKVTAVGS (75 aa)) the chain is on the mitochondrial intermembrane side. Residues 614-676 (GVKPVGSELV…STSKVTAVGS (63 aa)) form a C-terminal domain region. An N6-acetyllysine modification is found at K663. At S667 the chain carries Phosphoserine.

This sequence belongs to the mitochondrial carrier (TC 2.A.29) family. In terms of assembly, homodimer (via N-terminus).

It is found in the mitochondrion inner membrane. It catalyses the reaction L-aspartate(in) + L-glutamate(out) + H(+)(out) = L-aspartate(out) + L-glutamate(in) + H(+)(in). It carries out the reaction 3-sulfino-L-alanine(out) + L-glutamate(in) + H(+)(in) = 3-sulfino-L-alanine(in) + L-glutamate(out) + H(+)(out). The catalysed reaction is 3-sulfino-L-alanine(out) + L-aspartate(in) = 3-sulfino-L-alanine(in) + L-aspartate(out). Its activity is regulated as follows. L-aspartate and 3-sulfino-L-alanine uptake are both inhibited by glisoxepide. Mitochondrial electrogenic aspartate/glutamate antiporter that favors efflux of aspartate and entry of glutamate and proton within the mitochondria as part of the malate-aspartate shuttle. Also mediates the uptake of L-cysteinesulfinate (3-sulfino-L-alanine) by mitochondria in exchange of L-glutamate and proton. Can also exchange L-cysteinesulfinate with aspartate in their anionic form without any proton translocation. Lacks transport activity towards gamma-aminobutyric acid (GABA). This Rattus norvegicus (Rat) protein is Electrogenic aspartate/glutamate antiporter SLC25A13, mitochondrial.